The following is a 342-amino-acid chain: C-X-C chemokine receptor type 6 (342 aa).

Residues 1-32 (MAEHDYHEDYGFSSFNDSSQEEHQDFLQFSKV) lie on the Extracellular side of the membrane. Asn16 carries N-linked (GlcNAc...) asparagine glycosylation. Residues 33-59 (FLPCMYLVVFVCGLVGNSLVLVISIFY) traverse the membrane as a helical segment. Residues 60 to 68 (HKLQSLTDV) are Cytoplasmic-facing. A helical membrane pass occupies residues 69-89 (FLVNLPLADLVFVCTLPFWAY). Residues 90–103 (AGIHEWVFGQVMCK) lie on the Extracellular side of the membrane. A disulfide bridge links Cys102 with Cys180. Residues 104 to 125 (SLLGIYTINFYTSMLILTCITV) form a helical membrane-spanning segment. Topologically, residues 126-143 (DRFIVVVKATKAYNQQAK) are cytoplasmic. The helical transmembrane segment at 144–164 (RMTWGKVTSLLIWVISLLVSL) threads the bilayer. Over 165–187 (PQIIYGNVFNLDKLICGYHDEAI) the chain is Extracellular. A helical membrane pass occupies residues 188 to 215 (STVVLATQMTLGFFLPLLTMIVCYSVII). Topologically, residues 216-231 (KTLLHAGGFQKHRSLK) are cytoplasmic. Residues 232–259 (IIFLVMAVFLLTQMPFNLMKFIRSTHWE) form a helical membrane-spanning segment. The Extracellular portion of the chain corresponds to 260–275 (YYAMTSFHYTIMVTEA). A helical membrane pass occupies residues 276–293 (IAYLRACLNPVLYAFVSL). Over 294–342 (KFRKNFWKLVKDIGCLPYLGVSHQWKSSEDNSKTFSASHNVEATSMFQL) the chain is Cytoplasmic.

It belongs to the G-protein coupled receptor 1 family. In terms of tissue distribution, expressed in lymphoid tissues and activated T cells.

The protein resides in the cell membrane. Functionally, receptor for the C-X-C chemokine CXCL16. Used as a coreceptor by SIVs and by strains of HIV-2 and m-tropic HIV-1. The polypeptide is C-X-C chemokine receptor type 6 (CXCR6) (Homo sapiens (Human)).